We begin with the raw amino-acid sequence, 447 residues long: Probable ribosomal RNA small subunit methyltransferase B (447 aa).

S-adenosyl-L-methionine is bound by residues 259 to 265 (CAAPGGK), aspartate 283, aspartate 310, and aspartate 329. Cysteine 382 serves as the catalytic Nucleophile.

This sequence belongs to the class I-like SAM-binding methyltransferase superfamily. RsmB/NOP family.

It is found in the cytoplasm. It catalyses the reaction cytidine(967) in 16S rRNA + S-adenosyl-L-methionine = 5-methylcytidine(967) in 16S rRNA + S-adenosyl-L-homocysteine + H(+). Functionally, specifically methylates the cytosine at position 967 (m5C967) of 16S rRNA. The protein is Probable ribosomal RNA small subunit methyltransferase B of Bacillus subtilis (strain 168).